The following is a 504-amino-acid chain: Arabinose import ATP-binding protein AraG (504 aa).

ABC transporter domains follow at residues 8-243 (LSFR…MVGR) and 256-499 (YGEE…MPKV). 40 to 47 (GENGAGKS) contributes to the ATP binding site.

The protein belongs to the ABC transporter superfamily. Arabinose importer (TC 3.A.1.2.2) family. In terms of assembly, the complex is composed of two ATP-binding proteins (AraG), two transmembrane proteins (AraH) and a solute-binding protein (AraF).

The protein localises to the cell inner membrane. It carries out the reaction L-arabinose(out) + ATP + H2O = L-arabinose(in) + ADP + phosphate + H(+). Part of the ABC transporter complex AraFGH involved in arabinose import. Responsible for energy coupling to the transport system. The polypeptide is Arabinose import ATP-binding protein AraG (Shigella sonnei (strain Ss046)).